Consider the following 152-residue polypeptide: Ribonuclease H (152 aa).

The RNase H type-1 domain maps to 6–147 (KKNNVIAYTD…ADELANKAIA (142 aa)). Residues aspartate 15, glutamate 53, aspartate 75, and aspartate 139 each contribute to the Mg(2+) site.

Belongs to the RNase H family. In terms of assembly, monomer. It depends on Mg(2+) as a cofactor.

It is found in the cytoplasm. It catalyses the reaction Endonucleolytic cleavage to 5'-phosphomonoester.. Its function is as follows. Endonuclease that specifically degrades the RNA of RNA-DNA hybrids. The sequence is that of Ribonuclease H from Francisella philomiragia subsp. philomiragia (strain ATCC 25017 / CCUG 19701 / FSC 153 / O#319-036).